A 424-amino-acid polypeptide reads, in one-letter code: Histone-binding protein RBBP7 (424 aa).

WD repeat units follow at residues 47–121 (QWLP…KINH), 127–172 (RARY…LRLR), 180–216 (GLSWNSNLKGHLLSASDDHTVCLWDISAGPKEGKIVD), 227–268 (VVED…HSVD), 274–311 (VNCLSFNPYSEFILATGSADKTVALWDLRNLKLKLHSF), 317–368 (EIFQ…LFIH), and 375–402 (ISDFSWNPNEPWVICSVSEDNIMQIWQM). The segment at 359-404 (DGPPELLFIHGGHTAKISDFSWNPNEPWVICSVSEDNIMQIWQMAE) is interaction with HAT1.

This sequence belongs to the WD repeat RBAP46/RBAP48/MSI1 family. As to quaternary structure, binds directly to helix 1 of the histone fold of histone H4, a region that is not accessible when H4 is in chromatin. Also interacts with histone H2B and HAT1.

It is found in the nucleus. Its function is as follows. Core histone-binding subunit that may target chromatin remodeling factors, histone acetyltransferases and histone deacetylases to their histone substrates in a manner that is regulated by nucleosomal DNA. Component of several complexes which regulate chromatin metabolism. This Gallus gallus (Chicken) protein is Histone-binding protein RBBP7 (RBBP7).